The following is a 551-amino-acid chain: MFS-type transporter ATEG_00331 (551 aa).

An N-terminal signal peptide occupies residues 1–18 (MKAWLLVSSLCLSTFIAA). The next 4 helical transmembrane spans lie at 40-60 (LEFTWIGTAYLLPAAASTPPW), 71-91 (PVLMISIVVFFIGSLIGALAI), 102-122 (IQGTGGGGILGLSATVIGDVF), and 132-152 (GVLGVTWGVACGLGPIVGGAF). 2 N-linked (GlcNAc...) asparagine glycosylation sites follow: Asn-165 and Asn-178. 8 helical membrane passes run 179–199 (LTTSVPVAGVAGALVLLFLEV), 206–228 (IIEGLLAMDWLGTITIVGATVMF), 233–255 (GYGGIAYPWNSATVVCLIVFGIG), 324–344 (VYLLPVAVTLCVASTATGLYI), 354–374 (IYFGLVMMILGHGLYINLQPY), 380–400 (IIIFQIIAGLGLGPLFQAPII), 417–437 (TVFFARDIATAMSIVFGGVIF), and 493–513 (SEWIFYTALSGAALLLSVFIS). Residue Asn-524 is glycosylated (N-linked (GlcNAc...) asparagine).

It belongs to the major facilitator superfamily. TCR/Tet family.

It is found in the membrane. Its function is as follows. MFS-type transporter; part of the gene cluster that mediates the biosynthesis of isoflavipucine. The polypeptide is MFS-type transporter ATEG_00331 (Aspergillus terreus (strain NIH 2624 / FGSC A1156)).